The primary structure comprises 438 residues: Ammonium transporter Rh type A (438 aa).

At 1–4 (MRFK) the chain is on the cytoplasmic side. A helical transmembrane segment spans residues 5–25 (FPLMAISLEVAMIVLFGLFVE). The Extracellular portion of the chain corresponds to 26-61 (YETPQNASQKNASHQNASQQGNTSSSAKKDQFFQLY). N-linked (GlcNAc...) asparagine glycans are attached at residues N31, N36, N41, and N47. Residues 62 to 82 (PLFQDVHVMIFVGFGFLMTFL) traverse the membrane as a helical segment. Topologically, residues 83–86 (KKYG) are cytoplasmic. A helical membrane pass occupies residues 87–107 (FSGVGFNLFLAALGLQWGTIM). At 108-121 (QGLLHSHGKEFHFG) the chain is on the extracellular side. The helical transmembrane segment at 122–142 (IYNMINADFSTATVLISFGAV) threads the bilayer. Residues 143–148 (LGKTSP) lie on the Cytoplasmic side of the membrane. A helical membrane pass occupies residues 149 to 169 (IQMLIMTILEIAVFAGNEYLV). Residues 170-178 (TELFEASDT) lie on the Extracellular side of the membrane. A helical transmembrane segment spans residues 179 to 199 (GASMTIHAFGAYFGLAVAGVL). Residues 200–218 (YRPGLRCEHPNDESVYHSD) are Cytoplasmic-facing. The helical transmembrane segment at 219–239 (LFAMIGTLFLWIFWPSFNSAI) threads the bilayer. The Extracellular portion of the chain corresponds to 240–249 (ADPGDHQYRA). The helical transmembrane segment at 250–270 (IVNTYMSLAACVITAYALSSL) threads the bilayer. At 271 to 278 (VERRGRLD) the chain is on the cytoplasmic side. A helical membrane pass occupies residues 279 to 296 (MVHIQNATLAGGVAVGTC). At 297 to 300 (ADME) the chain is on the extracellular side. A helical membrane pass occupies residues 301–321 (IPLYAAMTIGSIAGIISVLGY). Residues 322 to 342 (KFFSPLLANKLMIHDTCGVHN) lie on the Cytoplasmic side of the membrane. A helical membrane pass occupies residues 343–363 (LHGLPGVFGGLASIVAISWGM). At 364–372 (STASMAMQA) the chain is on the extracellular side. The chain crosses the membrane as a helical span at residues 373–393 (AALGSSIGSAIVGGLLTGLIL). Over 394 to 438 (KLPIWNQPPDEYCYDDSVSWKVPKFRELDNRFFQHANHNHVEHEV) the chain is Cytoplasmic.

It belongs to the ammonium transporter (TC 2.A.49) family. Rh subfamily. As to quaternary structure, homodimer. Heterotrimer; a RHCE monomer interacts with a RHAG homodimer. Component of the ankyrin-1 complex in the erythrocyte, composed of ANK1, RHCE, RHAG, SLC4A1, EPB42, GYPA, GYPB and AQP1. Interacts with GYPB (via the N-terminal); this interaction bridges the (RHAG)2(RHCE) heterotrimer with the SLC4A1 Band 3 I dimer complexed with GYPA. Glycosylated.

The protein localises to the membrane. It catalyses the reaction methylamine(out) = methylamine(in). The catalysed reaction is NH4(+)(in) = NH4(+)(out). It carries out the reaction CO2(out) = CO2(in). Component of the ankyrin-1 complex, a multiprotein complex involved in the stability and shape of the erythrocyte membrane. Heterotrimer with RHCE (RHAG)2(RHCE), that transports ammonium and its related derivative methylammonium, in both neutral and ionic forms, across the erythrocyte membrane. The transport of NH4(+) is electrogenic and masks the NH3 transport. Also, may act as a CO2 channel. Moreover in erythrocyte, regulates RHD membrane expression and is associated with rhesus blood group antigen expression. In Mus musculus (Mouse), this protein is Ammonium transporter Rh type A.